We begin with the raw amino-acid sequence, 48 residues long: uncharacterized protein (48 aa).

Residues 18-38 (IIIKYWYIDLTITIFAFLILY) form a helical membrane-spanning segment.

The protein localises to the host membrane. This is an uncharacterized protein from Acidianus bottle-shaped virus (isolate Italy/Pozzuoli) (ABV).